The primary structure comprises 85 residues: MTKDELFEKVKEIIVDTLSVDEDEVTLDASFTDDLDADSLELVDLTMAFESEFGVTIEDEELEKIKTVENAVNLLSEKLNIDDED.

The Carrier domain occupies D4–L79. An O-(pantetheine 4'-phosphoryl)serine modification is found at S39.

It belongs to the acyl carrier protein (ACP) family. 4'-phosphopantetheine is transferred from CoA to a specific serine of apo-ACP by AcpS. This modification is essential for activity because fatty acids are bound in thioester linkage to the sulfhydryl of the prosthetic group.

It localises to the cytoplasm. It participates in lipid metabolism; fatty acid biosynthesis. Carrier of the growing fatty acid chain in fatty acid biosynthesis. The sequence is that of Acyl carrier protein from Petrotoga mobilis (strain DSM 10674 / SJ95).